Reading from the N-terminus, the 179-residue chain is Inner membrane-spanning protein YciB (179 aa).

5 helical membrane passes run 22 to 42 (IYAATAALIVATAIVLIYSWV), 50 to 70 (MALITFVLVVVFGGLTLFFHN), 76 to 96 (WKVTVIYALFAGALLVSQWVM), 121 to 141 (LAWAVFFILCGLANIYIAFWL), and 149 to 169 (FKVFGLTALTLIFTLLSGIYI).

The protein belongs to the YciB family.

The protein localises to the cell inner membrane. Plays a role in cell envelope biogenesis, maintenance of cell envelope integrity and membrane homeostasis. The polypeptide is Inner membrane-spanning protein YciB (Shigella boydii serotype 18 (strain CDC 3083-94 / BS512)).